Reading from the N-terminus, the 202-residue chain is ATP-dependent Clp protease proteolytic subunit (202 aa).

Ser-106 serves as the catalytic Nucleophile. Residue His-131 is part of the active site.

Belongs to the peptidase S14 family. Fourteen ClpP subunits assemble into 2 heptameric rings which stack back to back to give a disk-like structure with a central cavity, resembling the structure of eukaryotic proteasomes.

It localises to the cytoplasm. It carries out the reaction Hydrolysis of proteins to small peptides in the presence of ATP and magnesium. alpha-casein is the usual test substrate. In the absence of ATP, only oligopeptides shorter than five residues are hydrolyzed (such as succinyl-Leu-Tyr-|-NHMec, and Leu-Tyr-Leu-|-Tyr-Trp, in which cleavage of the -Tyr-|-Leu- and -Tyr-|-Trp bonds also occurs).. Its function is as follows. Cleaves peptides in various proteins in a process that requires ATP hydrolysis. Has a chymotrypsin-like activity. Plays a major role in the degradation of misfolded proteins. This chain is ATP-dependent Clp protease proteolytic subunit, found in Shewanella oneidensis (strain ATCC 700550 / JCM 31522 / CIP 106686 / LMG 19005 / NCIMB 14063 / MR-1).